We begin with the raw amino-acid sequence, 1181 residues long: DNA-directed RNA polymerase subunit beta' (1181 aa).

Zn(2+) is bound by residues Cys68, Cys70, Cys83, and Cys86. Mg(2+)-binding residues include Asp457, Asp459, and Asp461. 4 residues coordinate Zn(2+): Cys802, Cys876, Cys883, and Cys886.

Belongs to the RNA polymerase beta' chain family. In terms of assembly, the RNAP catalytic core consists of 2 alpha, 1 beta, 1 beta' and 1 omega subunit. When a sigma factor is associated with the core the holoenzyme is formed, which can initiate transcription. Mg(2+) serves as cofactor. Zn(2+) is required as a cofactor.

It catalyses the reaction RNA(n) + a ribonucleoside 5'-triphosphate = RNA(n+1) + diphosphate. In terms of biological role, DNA-dependent RNA polymerase catalyzes the transcription of DNA into RNA using the four ribonucleoside triphosphates as substrates. In Syntrophomonas wolfei subsp. wolfei (strain DSM 2245B / Goettingen), this protein is DNA-directed RNA polymerase subunit beta'.